The following is a 371-amino-acid chain: Zinc transporter ZIP13 (371 aa).

Topologically, residues 1-7 (MPGCPCP) are lumenal. Residues 8-28 (GCGMAGPRLLFLTALALELLE) form a helical membrane-spanning segment. Residues 29 to 68 (RAGGSQPALRSRGTATACRLDNKESESWGALLSGERLDTW) lie on the Cytoplasmic side of the membrane. Residues 69–89 (ICSLLGSLMVGLSGVFPLLVI) traverse the membrane as a helical segment. The Lumenal portion of the chain corresponds to 90–108 (PLEMGTMLRSEAGAWRLKQ). The chain crosses the membrane as a helical span at residues 109 to 129 (LLSFALGGLLGNVFLHLLPEA). Residues 130-149 (WAYTCSASPGGEGQSLQQQQ) lie on the Cytoplasmic side of the membrane. Residues 150-170 (QLGLWVIAGILTFLALEKMFL) form a helical membrane-spanning segment. Residues 171–235 (DSKEEGTSQA…TIDNFTHGLA (65 aa)) lie on the Lumenal side of the membrane. Residues 236 to 256 (VAASFLVSKKIGLLTTMAILL) form a helical membrane-spanning segment. Residues 257 to 262 (HEIPHE) carry the XEXPHE-motif motif. Topologically, residues 257–278 (HEIPHEVGDFAILLRAGFDRWS) are cytoplasmic. A helical transmembrane segment spans residues 279–299 (AAKLQLSTALGGLLGAGFAIC). Residues 300–316 (TQSPKGVVGCSPAAEET) lie on the Lumenal side of the membrane. A helical membrane pass occupies residues 317-337 (AAWVLPFTSGGFLYIALVNVL). Over 338–349 (PDLLEEEDPWRS) the chain is Cytoplasmic. The chain crosses the membrane as a helical span at residues 350-370 (LQQLLLLCAGIVVMVLFSLFV). Asp371 is a topological domain (lumenal).

This sequence belongs to the ZIP transporter (TC 2.A.5) family. Homodimer.

Its subcellular location is the golgi apparatus membrane. The protein localises to the cytoplasmic vesicle membrane. The protein resides in the endoplasmic reticulum membrane. It carries out the reaction Zn(2+)(in) = Zn(2+)(out). Functions as a zinc transporter transporting Zn(2+) from the Golgi apparatus to the cytosol and thus influences the zinc level at least in areas of the cytosol. May regulate beige adipocyte differentiation. This is Zinc transporter ZIP13 from Homo sapiens (Human).